Reading from the N-terminus, the 274-residue chain is MKKLFLGALLLVFAGVMAACGSNNGAESGKKEIVVAATKTPHAEILKEAEPLLKEKGYTLKVKVLSDYKMYNKALADKEVDANYFQHIPYLEQEMKENTDYKLVNAGAVHLEPFGIYSKTYKSLKDLPDGATIILTNNVAEQGRMLAMLENAGLITLDSKVETVDATLKDIKKNPKNLEFKKVAPELTAKAYENKEGDAVFINVNYAIQNKLNPKKDAIEVESTKNNPYANIIAVRKGEEDSAKIKALMEVLHSKKIKDFIEKKYDGAVLPVSE.

An N-terminal signal peptide occupies residues 1–19 (MKKLFLGALLLVFAGVMAA). C20 carries N-palmitoyl cysteine lipidation. A lipid anchor (S-diacylglycerol cysteine) is attached at C20.

It belongs to the NlpA lipoprotein family. The complex is composed of two ATP-binding proteins (MetN), two transmembrane proteins (MetP) and a solute-binding protein (metQ).

The protein localises to the cell membrane. Its function is as follows. Part of the ABC transporter complex MetNPQ involved in methionine import. Binds the methionine and transfers it to the membrane-bound permease. It has also been shown to be involved in methionine sulfoxide transport. This is Methionine-binding lipoprotein MetQ (metQ) from Bacillus subtilis (strain 168).